Here is a 166-residue protein sequence, read N- to C-terminus: Lipoprotein signal peptidase (166 aa).

Transmembrane regions (helical) follow at residues 9-29, 37-57, 71-91, and 100-120; these read AGGS…FDQL, VFAY…LVYN, WQRW…CYLL, and FCTA…DRLL. Residues Asp-126 and Asp-144 contribute to the active site. A helical membrane pass occupies residues 136–156; that stretch reads HWPAFNLADSAITIGAALLVF.

It belongs to the peptidase A8 family.

It is found in the cell inner membrane. The enzyme catalyses Release of signal peptides from bacterial membrane prolipoproteins. Hydrolyzes -Xaa-Yaa-Zaa-|-(S,diacylglyceryl)Cys-, in which Xaa is hydrophobic (preferably Leu), and Yaa (Ala or Ser) and Zaa (Gly or Ala) have small, neutral side chains.. It participates in protein modification; lipoprotein biosynthesis (signal peptide cleavage). Its function is as follows. This protein specifically catalyzes the removal of signal peptides from prolipoproteins. This chain is Lipoprotein signal peptidase, found in Paraburkholderia phymatum (strain DSM 17167 / CIP 108236 / LMG 21445 / STM815) (Burkholderia phymatum).